Reading from the N-terminus, the 87-residue chain is U3-theraphotoxin-Hhn1a 12 (87 aa).

The N-terminal stretch at 1–24 is a signal peptide; sequence MVNMKASMFLTFAGLVLLFVVCYA. Positions 25 to 52 are excised as a propeptide; it reads SESEEKEFPKEMLSSIFAVDKDFKQEER. Disulfide bonds link cysteine 54–cysteine 67, cysteine 61–cysteine 72, and cysteine 66–cysteine 79.

This sequence belongs to the neurotoxin 10 (Hwtx-1) family. 51 (Hntx-8) subfamily. Hntx-8 sub-subfamily. As to expression, expressed by the venom gland.

Its subcellular location is the secreted. Ion channel inhibitor. In Cyriopagopus hainanus (Chinese bird spider), this protein is U3-theraphotoxin-Hhn1a 12.